Reading from the N-terminus, the 142-residue chain is MGDSESFVGKNWNGLKDFWSDRLSFFENYTRFTKRDAPLPSWSSSDVEEFIASDPVHGPTLKTAREAVTFGVTGAALGAVSTAAFAWKYSRSPHGAALSFLGGGVFGWTFGQEVANHTLQLYKLDTMAAQVKFMEWWERKSQ.

The residue at position 2 (G2) is an N-acetylglycine.

As to quaternary structure, component of complex II composed of eight subunits in plants: four classical SDH subunits SDH1, SDH2, SDH3 and SDH4 (a flavoprotein (FP), an iron-sulfur protein (IP), and a cytochrome b composed of a large and a small subunit.), as well as four subunits unknown in mitochondria from bacteria and heterotrophic eukaryotes.

Its subcellular location is the mitochondrion inner membrane. It functions in the pathway carbohydrate metabolism; tricarboxylic acid cycle. The polypeptide is Succinate dehydrogenase subunit 6, mitochondrial (Arabidopsis thaliana (Mouse-ear cress)).